Consider the following 554-residue polypeptide: Trimethyltridecatetraene synthase (554 aa).

Residues 1 to 21 (MSAAVALAVILAVYVVLRYIS) traverse the membrane as a helical segment. C464 serves as a coordination point for heme.

The protein belongs to the cytochrome P450 family. Heme is required as a cofactor.

The protein localises to the membrane. The catalysed reaction is (6E,10E)-geranyllinalool + reduced [NADPH--hemoprotein reductase] + O2 = (3E,7E)-4,8,12-trimethyltrideca 1,3,7,11-tetraene + but-3-en-2-one + oxidized [NADPH--hemoprotein reductase] + 2 H2O + H(+). It functions in the pathway secondary metabolite biosynthesis; terpenoid biosynthesis. In terms of biological role, component of the volatile terpenes biosynthesis pathways. Converts mainly geranyllinalool to trimethyltridecatetraene (TMTT). In Zea mays (Maize), this protein is Trimethyltridecatetraene synthase.